A 935-amino-acid polypeptide reads, in one-letter code: MKGLTCFLLCFLLSEAQGFEIPTNGLSEFAEYGDLAELALGKFHVVPGNRRSQEGVDQVTLYSYKVQSTITSRMANTVIQTKVVNHSPEPQDVVFDIQIPKGAFISNFSMTVDGTKFTSSIKEKTVGRALYWQARAKGKTAGLVRSRALDMENFKTEVNIAPGAKVQFELHYQEVKWRNLGSYEHRIHLQPGRLAKHLEVDVQIIEPQGLRFLHVLDTFDGHFDGVPVVVKGQQKAHVAFKPTVAQQRKCPSCSETAVDGELVVMYDVNREQKAGELQLFNGYFVHFFAPESMDPIPKNILFVIDVSGSMWGIKMKQTVEAMKTILDDLRAEDQFSLVDFNHNIRTWRNDLVSATKTQVADAKTYIEKIQPSGGTNINEALLRAIFILNEANNLGLLDPNSVSLIILVSDGDPTVGELQLSKIQKNVKQNIQDNVSLFSLGIGFDVDYDFLKRLSNDNRGMAQRIYGNQDTASQLKKFYNQVSTPLLRNVQFNYPQASVTDVTQNSFPNYFGGSEIVVAGKFNPEKLEQLQGIITATSANVELVLETLAEMDGLEAFLAKDRHADPDFTKKLWAYLTINQLLDERSRAPSAAVKKKITKSILQMSLDHHIVTPLTAMVVENEAGDERMLADAPPQDQSCCSGTLNYGRKVTPNSLPSWVNPLPTPRVPLPAVGPSVIEATPPPHVMRVENDPHFIIYLPRSQQNICFNIDSEPGKILNLVSDPESGIVINGQLISAKKLKDGKLSTYFGKIGFYFQHEDVKVEISTETISLSRGSRVSVLSWSDSALVLNQRVHISVKKEKTVTVTLDQEVSFSVLLHRVWKKHPINVDFLGIYIPPTTKFSPKAHGLIGQFMHEPEIRIFNERPGKDPEKPEASMEVKGQTLVVTRGLQKDYRTDRVFGTDVPCWFVHNSGKGFIDGHYKDYLVPLLYSFLKRP.

The N-terminal stretch at 1–18 (MKGLTCFLLCFLLSEAQG) is a signal peptide. Residues 19–53 (FEIPTNGLSEFAEYGDLAELALGKFHVVPGNRRSQ) constitute a propeptide that is removed on maturation. Residues 45 to 174 (VVPGNRRSQE…KVQFELHYQE (130 aa)) enclose the VIT domain. Asn-107 is a glycosylation site (N-linked (GlcNAc...) asparagine). A 4-carboxyglutamate modification is found at Glu-271. A VWFA domain is found at 297-457 (PKNILFVIDV…YDFLKRLSND (161 aa)). Asn-434 carries N-linked (GlcNAc...) asparagine glycosylation. Ser-455 carries the phosphoserine modification. At Asp-691 the chain carries Aspartate 1-(chondroitin 4-sulfate)-ester. The propeptide occupies 692–935 (PHFIIYLPRS…PLLYSFLKRP (244 aa)). Position 875 is a phosphoserine (Ser-875).

The protein belongs to the ITIH family. As to quaternary structure, I-alpha-I plasma protease inhibitors are assembled from one or two heavy chains (HC) and one light chain, bikunin. Inter-alpha-inhibitor (I-alpha-I) is composed of ITIH1/HC1, ITIH2/HC2 and bikunin. In terms of processing, heavy chains are linked to bikunin via chondroitin 4-sulfate esterified to the alpha-carboxyl of the C-terminal aspartate after propeptide cleavage. Phosphorylated by FAM20C in the extracellular medium.

The protein localises to the secreted. Its function is as follows. May act as a carrier of hyaluronan in serum or as a binding protein between hyaluronan and other matrix protein, including those on cell surfaces in tissues to regulate the localization, synthesis and degradation of hyaluronan which are essential to cells undergoing biological processes. The polypeptide is Inter-alpha-trypsin inhibitor heavy chain H2 (ITIH2) (Sus scrofa (Pig)).